The sequence spans 493 residues: Dynein regulatory complex subunit 2 (493 aa).

2 coiled-coil regions span residues 99 to 163 (DSVI…RKLI) and 253 to 280 (KDEK…ILKG).

Belongs to the DRC2 family. Component of the nexin-dynein regulatory complex (N-DRC). Interacts with DRC1.

Its subcellular location is the cytoplasm. It is found in the cytoskeleton. The protein localises to the flagellum basal body. The protein resides in the cell projection. It localises to the cilium. Its subcellular location is the flagellum. It is found in the flagellum axoneme. Component of the nexin-dynein regulatory complex (N-DRC), a key regulator of ciliary/flagellar motility which maintains the alignment and integrity of the distal axoneme and regulates microtubule sliding in motile axonemes. Plays a critical role in the assembly of N-DRC and also stabilizes the assembly of multiple inner dynein arms and radial spokes. Coassembles with DRC1 to form a central scaffold needed for assembly of the N-DRC and its attachment to the outer doublet microtubules. The sequence is that of Dynein regulatory complex subunit 2 (Ccdc65) from Mus musculus (Mouse).